The sequence spans 209 residues: Thymidine kinase (209 aa).

ATP-binding positions include 16-23 (GPMFAGKT) and 90-93 (DESQ). Residue Glu-91 is the Proton acceptor of the active site.

The protein belongs to the thymidine kinase family. As to quaternary structure, homotetramer.

The protein resides in the cytoplasm. The enzyme catalyses thymidine + ATP = dTMP + ADP + H(+). This is Thymidine kinase from Aster yellows witches'-broom phytoplasma (strain AYWB).